We begin with the raw amino-acid sequence, 519 residues long: Histidine--tRNA ligase (519 aa).

The protein belongs to the class-II aminoacyl-tRNA synthetase family. In terms of assembly, homodimer.

The protein localises to the cytoplasm. The catalysed reaction is tRNA(His) + L-histidine + ATP = L-histidyl-tRNA(His) + AMP + diphosphate + H(+). The chain is Histidine--tRNA ligase from Roseobacter denitrificans (strain ATCC 33942 / OCh 114) (Erythrobacter sp. (strain OCh 114)).